The primary structure comprises 279 residues: MATRYDDQAIETARQYYNSEDADNFYAIIWGGEDIHIGLYNDDEEPIADASRRTVERMSSLSRQLGPDSYVLDMGAGYGGSARYLAHKYGCKVAALNLSERENERDRQMNKEQGVDHLIEVVDAAFEDVPYDDGVFDLVWSQDSFLHSPDRERVLREASRVLRSGGEFIFTDPMQADDCPEGVIQPILDRIHLETMGTPNFYRQTLRDLGFEEITFEDHTHQLPRHYGRVRRELDRREGELQGHVSAEYIERMKNGLDHWVNGGNKGYLTWGIFYFRKG.

It belongs to the methyltransferase superfamily. In terms of assembly, monomer.

The enzyme catalyses sarcosine + 2 S-adenosyl-L-methionine = glycine betaine + 2 S-adenosyl-L-homocysteine + 2 H(+). It catalyses the reaction sarcosine + S-adenosyl-L-methionine = N,N-dimethylglycine + S-adenosyl-L-homocysteine + H(+). It carries out the reaction N,N-dimethylglycine + S-adenosyl-L-methionine = glycine betaine + S-adenosyl-L-homocysteine + H(+). Its pathway is amine and polyamine biosynthesis; betaine biosynthesis via glycine pathway; betaine from glycine: step 2/3. It participates in amine and polyamine biosynthesis; betaine biosynthesis via glycine pathway; betaine from glycine: step 3/3. P-chloromercuribenzoate acid inhibits 23% of the SDMT activities on sarcosine and dimethylglycine, and S-adenosylhomocysteine (AdoHcy) inhibits completely GSMT activities. Its function is as follows. Catalyzes the methylation of sarcosine and dimethylglycine to dimethylglycine and betaine, respectively, with S-adenosylmethionine (AdoMet) acting as the methyl donor. It has strict specificity for sarcosine and dimethylglycine as the methyl group acceptors. The chain is Sarcosine/dimethylglycine N-methyltransferase from Halorhodospira halochloris (Ectothiorhodospira halochloris).